The following is a 241-amino-acid chain: Eukaryotic translation initiation factor 6 (241 aa).

Belongs to the eIF-6 family. In terms of assembly, monomer. Associates with the 60S ribosomal subunit.

It is found in the cytoplasm. The protein resides in the nucleus. The protein localises to the nucleolus. Its function is as follows. Binds to the 60S ribosomal subunit and prevents its association with the 40S ribosomal subunit to form the 80S initiation complex in the cytoplasm. Is also involved in ribosome biogenesis. Associates with pre-60S subunits in the nucleus and is involved in its nuclear export. This chain is Eukaryotic translation initiation factor 6, found in Encephalitozoon cuniculi (strain GB-M1) (Microsporidian parasite).